A 505-amino-acid polypeptide reads, in one-letter code: Deoxyguanosinetriphosphate triphosphohydrolase (505 aa).

One can recognise an HD domain in the interval 66-273; that stretch reads RLTHSMEVQQ…MEAADDISYC (208 aa).

It belongs to the dGTPase family. Type 1 subfamily. As to quaternary structure, homotetramer. The cofactor is Mg(2+).

It carries out the reaction dGTP + H2O = 2'-deoxyguanosine + triphosphate + H(+). DGTPase preferentially hydrolyzes dGTP over the other canonical NTPs. The polypeptide is Deoxyguanosinetriphosphate triphosphohydrolase (Shigella boydii serotype 4 (strain Sb227)).